Consider the following 411-residue polypeptide: Putative nickel insertion protein (411 aa).

The protein belongs to the LarC family.

This chain is Putative nickel insertion protein, found in Acaryochloris marina (strain MBIC 11017).